The primary structure comprises 508 residues: Photosystem II CP47 reaction center protein (508 aa).

6 consecutive transmembrane segments (helical) span residues 21–36, 101–115, 140–156, 203–218, 237–252, and 457–472; these read SVHI…WAGS, IVFS…IWHW, GIHL…FGAF, IAAG…FHLS, VLSS…AFVV, and SFAL…HGAR.

This sequence belongs to the PsbB/PsbC family. PsbB subfamily. PSII is composed of 1 copy each of membrane proteins PsbA, PsbB, PsbC, PsbD, PsbE, PsbF, PsbH, PsbI, PsbJ, PsbK, PsbL, PsbM, PsbT, PsbX, PsbY, PsbZ, Psb30/Ycf12, at least 3 peripheral proteins of the oxygen-evolving complex and a large number of cofactors. It forms dimeric complexes. It depends on Binds multiple chlorophylls. PSII binds additional chlorophylls, carotenoids and specific lipids. as a cofactor.

The protein localises to the plastid. Its subcellular location is the chloroplast thylakoid membrane. Functionally, one of the components of the core complex of photosystem II (PSII). It binds chlorophyll and helps catalyze the primary light-induced photochemical processes of PSII. PSII is a light-driven water:plastoquinone oxidoreductase, using light energy to abstract electrons from H(2)O, generating O(2) and a proton gradient subsequently used for ATP formation. The polypeptide is Photosystem II CP47 reaction center protein (Panax ginseng (Korean ginseng)).